The primary structure comprises 442 residues: tRNA modification GTPase MnmE (442 aa).

(6S)-5-formyl-5,6,7,8-tetrahydrofolate contacts are provided by arginine 22, glutamate 79, and lysine 118. Positions 215–365 (EIPIAIVGRP…LEKAILFEYQ (151 aa)) constitute a TrmE-type G domain. Asparagine 225 contacts K(+). Residues 225-230 (NVGKSS), 244-250 (TNIEGTT), and 269-272 (DTAG) contribute to the GTP site. Position 229 (serine 229) interacts with Mg(2+). The K(+) site is built by threonine 244, isoleucine 246, and threonine 249. Threonine 250 lines the Mg(2+) pocket. (6S)-5-formyl-5,6,7,8-tetrahydrofolate is bound at residue lysine 442.

The protein belongs to the TRAFAC class TrmE-Era-EngA-EngB-Septin-like GTPase superfamily. TrmE GTPase family. As to quaternary structure, homodimer. Heterotetramer of two MnmE and two MnmG subunits. K(+) is required as a cofactor.

Its subcellular location is the cytoplasm. Exhibits a very high intrinsic GTPase hydrolysis rate. Involved in the addition of a carboxymethylaminomethyl (cmnm) group at the wobble position (U34) of certain tRNAs, forming tRNA-cmnm(5)s(2)U34. In Mycoplasmopsis pulmonis (strain UAB CTIP) (Mycoplasma pulmonis), this protein is tRNA modification GTPase MnmE.